The primary structure comprises 1135 residues: Eukaryotic translation initiation factor 3 subunit A (1135 aa).

The PCI domain occupies 319–501 (LQRMAAHVLL…NSIYFGTDLT (183 aa)). Composition is skewed to basic and acidic residues over residues 588–623 (QNNA…EERE) and 829–899 (AAEE…RGGD). Disordered regions lie at residues 588–631 (QNNA…QNEI) and 829–1135 (AAEE…VKRR). Serine 908 is subject to Phosphoserine. Basic and acidic residues-rich tracts occupy residues 920–971 (ERNE…EPDS), 985–1045 (SRDD…EPQR), 1053–1081 (DAPR…RGDQ), and 1104–1125 (AREE…KAAD).

Belongs to the eIF-3 subunit A family. In terms of assembly, component of the eukaryotic translation initiation factor 3 (eIF-3) complex. The eIF-3 complex interacts with pix.

Its subcellular location is the cytoplasm. In terms of biological role, RNA-binding component of the eukaryotic translation initiation factor 3 (eIF-3) complex, which is involved in protein synthesis of a specialized repertoire of mRNAs and, together with other initiation factors, stimulates binding of mRNA and methionyl-tRNAi to the 40S ribosome. The eIF-3 complex specifically targets and initiates translation of a subset of mRNAs involved in cell proliferation. The protein is Eukaryotic translation initiation factor 3 subunit A of Drosophila erecta (Fruit fly).